The primary structure comprises 347 residues: Phenylalanine--tRNA ligase alpha subunit (347 aa).

Residue Glu261 coordinates Mg(2+).

It belongs to the class-II aminoacyl-tRNA synthetase family. Phe-tRNA synthetase alpha subunit type 1 subfamily. As to quaternary structure, tetramer of two alpha and two beta subunits. Mg(2+) is required as a cofactor.

It localises to the cytoplasm. It carries out the reaction tRNA(Phe) + L-phenylalanine + ATP = L-phenylalanyl-tRNA(Phe) + AMP + diphosphate + H(+). This Streptococcus pyogenes serotype M1 protein is Phenylalanine--tRNA ligase alpha subunit.